Consider the following 352-residue polypeptide: tRNA (guanine-N(1)-)-methyltransferase (352 aa).

S-adenosyl-L-methionine is bound by residues Gly109 and 129–134 (IGDYVL).

This sequence belongs to the RNA methyltransferase TrmD family. Homodimer.

The protein localises to the cytoplasm. It catalyses the reaction guanosine(37) in tRNA + S-adenosyl-L-methionine = N(1)-methylguanosine(37) in tRNA + S-adenosyl-L-homocysteine + H(+). In terms of biological role, specifically methylates guanosine-37 in various tRNAs. This Chlamydia trachomatis serovar A (strain ATCC VR-571B / DSM 19440 / HAR-13) protein is tRNA (guanine-N(1)-)-methyltransferase.